Consider the following 573-residue polypeptide: 2-isopropylmalate synthase (573 aa).

The Pyruvate carboxyltransferase domain maps to 37 to 314 (PRWLSTDLRD…DPQIDFSDID (278 aa)). 4 residues coordinate Mg(2+): Asp-46, His-253, His-255, and Asn-289. Residues 456–573 (NPDNPWGRIQ…VVSAVNRATR (118 aa)) form a regulatory domain region.

It belongs to the alpha-IPM synthase/homocitrate synthase family. LeuA type 2 subfamily. In terms of assembly, homodimer. Mg(2+) serves as cofactor.

It is found in the cytoplasm. It carries out the reaction 3-methyl-2-oxobutanoate + acetyl-CoA + H2O = (2S)-2-isopropylmalate + CoA + H(+). It functions in the pathway amino-acid biosynthesis; L-leucine biosynthesis; L-leucine from 3-methyl-2-oxobutanoate: step 1/4. Catalyzes the condensation of the acetyl group of acetyl-CoA with 3-methyl-2-oxobutanoate (2-ketoisovalerate) to form 3-carboxy-3-hydroxy-4-methylpentanoate (2-isopropylmalate). In Streptomyces coelicolor (strain ATCC BAA-471 / A3(2) / M145), this protein is 2-isopropylmalate synthase.